Consider the following 197-residue polypeptide: Pyridoxal 5'-phosphate synthase subunit PdxT (197 aa).

An L-glutamine-binding site is contributed by 54–56; sequence GES. The Nucleophile role is filled by C86. L-glutamine-binding positions include R113 and 141-142; that span reads IR. Catalysis depends on charge relay system residues H177 and E179.

It belongs to the glutaminase PdxT/SNO family. In terms of assembly, in the presence of PdxS, forms a dodecamer of heterodimers. Only shows activity in the heterodimer.

It carries out the reaction aldehydo-D-ribose 5-phosphate + D-glyceraldehyde 3-phosphate + L-glutamine = pyridoxal 5'-phosphate + L-glutamate + phosphate + 3 H2O + H(+). It catalyses the reaction L-glutamine + H2O = L-glutamate + NH4(+). It functions in the pathway cofactor biosynthesis; pyridoxal 5'-phosphate biosynthesis. Its function is as follows. Catalyzes the hydrolysis of glutamine to glutamate and ammonia as part of the biosynthesis of pyridoxal 5'-phosphate. The resulting ammonia molecule is channeled to the active site of PdxS. This is Pyridoxal 5'-phosphate synthase subunit PdxT from Haloarcula marismortui (strain ATCC 43049 / DSM 3752 / JCM 8966 / VKM B-1809) (Halobacterium marismortui).